Consider the following 194-residue polypeptide: dCTP deaminase (194 aa).

DCTP-binding positions include 110-115 (RSSLAR), aspartate 128, 136-138 (VLE), tyrosine 171, lysine 178, and glutamine 182. Glutamate 138 acts as the Proton donor/acceptor in catalysis.

Belongs to the dCTP deaminase family. Homotrimer.

It catalyses the reaction dCTP + H2O + H(+) = dUTP + NH4(+). It functions in the pathway pyrimidine metabolism; dUMP biosynthesis; dUMP from dCTP (dUTP route): step 1/2. Catalyzes the deamination of dCTP to dUTP. The polypeptide is dCTP deaminase (Mannheimia succiniciproducens (strain KCTC 0769BP / MBEL55E)).